Here is a 577-residue protein sequence, read N- to C-terminus: Moesin (577 aa).

The 294-residue stretch at 2–295 folds into the FERM domain; sequence PKTISVRVTT…GNHELYMRRR (294 aa). Residue S74 is modified to Phosphoserine. K79 bears the N6-acetyllysine mark. K83 is subject to N6-succinyllysine. The [IL]-x-C-x-x-[DE] motif signature appears at 115-120; sequence IYCPPE. Y116 carries the post-translational modification Phosphotyrosine. The residue at position 117 (C117) is an S-nitrosocysteine. An N6-acetyllysine mark is found at K139 and K165. Disordered stretches follow at residues 323–342, 375–409, and 466–518; these read LENE…KIER, LEQE…ASRD, and AMST…NERV. Over residues 375–401 the composition is skewed to basic and acidic residues; that stretch reads LEQERKRAQSEAEKLAKERQEAEEAKE. S407 carries the post-translational modification Phosphoserine. Residues 476 to 487 are compositionally biased toward acidic residues; that stretch reads AENEQDEQDENG. Residues 492-518 are compositionally biased toward basic and acidic residues; that stretch reads ADLRADAMAKDRSEEERTTEAEKNERV. S527 is modified (phosphoserine). Phosphothreonine; by ROCK2 and STK10 is present on T558.

In resting T-cells, part of a PAG1-NHERF1-MSN complex which is disrupted upon TCR activation. Interacts with NHERF1. Interacts with PPP1R16B. Interacts with SELPLG and SYK; these interactions mediate the activation of SYK by SELPLG. Interacts with PDPN (via cytoplasmic domain); this interaction activates RHOA and promotes epithelial-mesenchymal transition. Interacts with SPN/CD43 cytoplasmic tail. Interacts with CD44. Interacts with ICAM2. Interacts with ICAM3 (via C-terminus). Interacts with PDZD8. Interacts with F-actin. Interacts with CD46. Interacts with PTPN6. As to quaternary structure, (Microbial infection) Interacts with HIV-1 envelope protein gp120. Post-translationally, phosphorylation on Thr-558 is crucial for the formation of microvilli-like structures. Phosphorylation by ROCK2 suppresses the head-to-tail association of the N-terminal and C-terminal halves resulting in an opened conformation which is capable of actin and membrane-binding. Phosphorylation on Thr-558 by STK10 negatively regulates lymphocyte migration and polarization. S-nitrosylation of Cys-117 is induced by interferon-gamma and oxidatively-modified low-densitity lipoprotein (LDL(ox)) implicating the iNOS-S100A8/9 transnitrosylase complex. As to expression, in all tissues and cultured cells studied.

It is found in the cell membrane. The protein resides in the cytoplasm. It localises to the cytoskeleton. Its subcellular location is the apical cell membrane. The protein localises to the cell projection. It is found in the microvillus membrane. The protein resides in the microvillus. With respect to regulation, a head-to-tail association, of the N-terminal and C-terminal halves results in a closed conformation (inactive form) which is incapable of actin or membrane-binding. Ezrin-radixin-moesin (ERM) family protein that connects the actin cytoskeleton to the plasma membrane and thereby regulates the structure and function of specific domains of the cell cortex. Tethers actin filaments by oscillating between a resting and an activated state providing transient interactions between moesin and the actin cytoskeleton. Once phosphorylated on its C-terminal threonine, moesin is activated leading to interaction with F-actin and cytoskeletal rearrangement. These rearrangements regulate many cellular processes, including cell shape determination, membrane transport, and signal transduction. The role of moesin is particularly important in immunity acting on both T and B-cells homeostasis and self-tolerance, regulating lymphocyte egress from lymphoid organs. Modulates phagolysosomal biogenesis in macrophages. Also participates in immunologic synapse formation. The sequence is that of Moesin from Homo sapiens (Human).